Here is a 341-residue protein sequence, read N- to C-terminus: N-acetyl-gamma-glutamyl-phosphate reductase (341 aa).

The active site involves C145.

Belongs to the NAGSA dehydrogenase family. Type 1 subfamily.

It is found in the cytoplasm. The enzyme catalyses N-acetyl-L-glutamate 5-semialdehyde + phosphate + NADP(+) = N-acetyl-L-glutamyl 5-phosphate + NADPH + H(+). It participates in amino-acid biosynthesis; L-arginine biosynthesis; N(2)-acetyl-L-ornithine from L-glutamate: step 3/4. Functionally, catalyzes the NADPH-dependent reduction of N-acetyl-5-glutamyl phosphate to yield N-acetyl-L-glutamate 5-semialdehyde. The sequence is that of N-acetyl-gamma-glutamyl-phosphate reductase from Streptomyces clavuligerus.